The sequence spans 346 residues: MTTSSSSPLSYKDAGVDIDAGDALVERIKPLAKKTMREGVLAGIGGFGALFEVPKRYKEPVLVSGTDGVGTKLRLAFEWNMHDTVGIDLVAMSVNDVLVQGAEPLFFLDYFACGKLDVDTAAAVVGGIAKGCELSGCALIGGETAEMPGMYPEGEYDLAGFAVGAVEKSKILTGKEVQPGDVVLGLASSGVHSNGFSLVRKCIERAGADRPATLDGKPFKQALMEPTRLYVKNVLAALAAHPIKALAHITGGGLLENIPRVLPEGTAAHLKKGSWPQTELFAWLQKTAGIDDFEMNRTFNNGIGMVVVVDAANAQATAKTLRDAGEQVYEIGVIAPRGEGAAVIVG.

Belongs to the AIR synthase family.

It is found in the cytoplasm. The enzyme catalyses 2-formamido-N(1)-(5-O-phospho-beta-D-ribosyl)acetamidine + ATP = 5-amino-1-(5-phospho-beta-D-ribosyl)imidazole + ADP + phosphate + H(+). The protein operates within purine metabolism; IMP biosynthesis via de novo pathway; 5-amino-1-(5-phospho-D-ribosyl)imidazole from N(2)-formyl-N(1)-(5-phospho-D-ribosyl)glycinamide: step 2/2. In Polaromonas sp. (strain JS666 / ATCC BAA-500), this protein is Phosphoribosylformylglycinamidine cyclo-ligase.